The following is an 81-amino-acid chain: Photosystem I iron-sulfur center (81 aa).

4Fe-4S ferredoxin-type domains are found at residues 2–31 and 39–68; these read AHSV…MIPW and IASA…VRVY. Residues Cys11, Cys14, Cys17, Cys21, Cys48, Cys51, Cys54, and Cys58 each coordinate [4Fe-4S] cluster.

The eukaryotic PSI reaction center is composed of at least 11 subunits. The cofactor is [4Fe-4S] cluster.

It localises to the plastid. Its subcellular location is the chloroplast thylakoid membrane. The catalysed reaction is reduced [plastocyanin] + hnu + oxidized [2Fe-2S]-[ferredoxin] = oxidized [plastocyanin] + reduced [2Fe-2S]-[ferredoxin]. In terms of biological role, apoprotein for the two 4Fe-4S centers FA and FB of photosystem I (PSI); essential for photochemical activity. FB is the terminal electron acceptor of PSI, donating electrons to ferredoxin. The C-terminus interacts with PsaA/B/D and helps assemble the protein into the PSI complex. Required for binding of PsaD and PsaE to PSI. PSI is a plastocyanin-ferredoxin oxidoreductase, converting photonic excitation into a charge separation, which transfers an electron from the donor P700 chlorophyll pair to the spectroscopically characterized acceptors A0, A1, FX, FA and FB in turn. In Psilotum nudum (Whisk fern), this protein is Photosystem I iron-sulfur center.